Reading from the N-terminus, the 743-residue chain is Threonine synthase-like 1 (743 aa).

Lysine 281 carries the N6-acetyllysine modification. Lysine 351 is subject to N6-(pyridoxal phosphate)lysine.

It belongs to the threonine synthase family. Pyridoxal 5'-phosphate serves as cofactor.

In Macaca fascicularis (Crab-eating macaque), this protein is Threonine synthase-like 1 (THNSL1).